Consider the following 774-residue polypeptide: Lon protease 2 (774 aa).

The 194-residue stretch at 5–198 (YPLMPLRDIV…LLLEILFREL (194 aa)) folds into the Lon N-terminal domain. Residue 350 to 357 (GPPGVGKT) participates in ATP binding. The region spanning 588-769 (RDEVGLATGL…DQVLEQALLS (182 aa)) is the Lon proteolytic domain. Catalysis depends on residues serine 675 and lysine 718.

This sequence belongs to the peptidase S16 family. In terms of assembly, homohexamer. Organized in a ring with a central cavity.

The protein resides in the cytoplasm. It carries out the reaction Hydrolysis of proteins in presence of ATP.. In terms of biological role, ATP-dependent serine protease that mediates the selective degradation of mutant and abnormal proteins as well as certain short-lived regulatory proteins. Required for cellular homeostasis and for survival from DNA damage and developmental changes induced by stress. Degrades polypeptides processively to yield small peptide fragments that are 5 to 10 amino acids long. Binds to DNA in a double-stranded, site-specific manner. The protein is Lon protease 2 of Desulfotalea psychrophila (strain LSv54 / DSM 12343).